Reading from the N-terminus, the 31-residue chain is Protamine-YI (31 aa).

The segment at 1 to 31 (ARRRRSSSRPIRRRRPRRRTTRRRRAGRRRR) is disordered.

In terms of tissue distribution, testis.

The protein resides in the nucleus. It localises to the chromosome. Its function is as follows. Protamines substitute for histones in the chromatin of sperm during the haploid phase of spermatogenesis. They compact sperm DNA into a highly condensed, stable and inactive complex. The sequence is that of Protamine-YI from Clupea harengus (Atlantic herring).